Consider the following 76-residue polypeptide: Tabkunin 2 (76 aa).

Positions 1 to 20 (MKVLSLIFVIFSVLVLFASA) are cleaved as a signal peptide. Residues 25 to 75 (CDQPKAVGRCFAAFPKFYYNSSSGQCQAFIYGGCGGNENNFNTLEECNAKC) enclose the BPTI/Kunitz inhibitor domain. 3 disulfide bridges follow: Cys-25–Cys-75, Cys-34–Cys-58, and Cys-50–Cys-71.

As to expression, expressed in salivary glands.

It is found in the secreted. Functionally, potent anticoagulant protein that inhibits the hydrolytic activities of all serine proteases tested (trypsin, thrombin, elastase, and chymotrypsin), with the highest efficacy on thrombin. The protein is Tabkunin 2 of Tabanus yao (Horsefly).